A 260-amino-acid polypeptide reads, in one-letter code: NH(3)-dependent NAD(+) synthetase (260 aa).

31 to 38 serves as a coordination point for ATP; it reads GLSGGLDS. Asp-37 is a Mg(2+) binding site. Arg-112 is a binding site for deamido-NAD(+). An ATP-binding site is contributed by Thr-132. Residue Glu-137 coordinates Mg(2+). Positions 161 and 183 each coordinate ATP.

Belongs to the NAD synthetase family. Homodimer.

The catalysed reaction is deamido-NAD(+) + NH4(+) + ATP = AMP + diphosphate + NAD(+) + H(+). The protein operates within cofactor biosynthesis; NAD(+) biosynthesis; NAD(+) from deamido-NAD(+) (ammonia route): step 1/1. Catalyzes the ATP-dependent amidation of deamido-NAD to form NAD. Uses ammonia as a nitrogen source. The sequence is that of NH(3)-dependent NAD(+) synthetase from Helicobacter pylori (strain ATCC 700392 / 26695) (Campylobacter pylori).